A 309-amino-acid chain; its full sequence is Ribonuclease Z (309 aa).

Residues His63, His65, Asp67, His68, His145, Asp216, and His274 each contribute to the Zn(2+) site. Asp67 functions as the Proton acceptor in the catalytic mechanism.

Belongs to the RNase Z family. In terms of assembly, homodimer. Zn(2+) is required as a cofactor.

It catalyses the reaction Endonucleolytic cleavage of RNA, removing extra 3' nucleotides from tRNA precursor, generating 3' termini of tRNAs. A 3'-hydroxy group is left at the tRNA terminus and a 5'-phosphoryl group is left at the trailer molecule.. Functionally, zinc phosphodiesterase, which displays some tRNA 3'-processing endonuclease activity. Probably involved in tRNA maturation, by removing a 3'-trailer from precursor tRNA. The polypeptide is Ribonuclease Z (Streptococcus pyogenes serotype M6 (strain ATCC BAA-946 / MGAS10394)).